The chain runs to 701 residues: Elongation factor G (701 aa).

The region spanning 8-290 is the tr-type G domain; that stretch reads SLYRNIGISA…AVIDYLPAPT (283 aa). GTP is bound by residues 17–24, 88–92, and 142–145; these read AHIDAGKT, DTPGH, and NKMD.

Belongs to the TRAFAC class translation factor GTPase superfamily. Classic translation factor GTPase family. EF-G/EF-2 subfamily.

Its subcellular location is the cytoplasm. Catalyzes the GTP-dependent ribosomal translocation step during translation elongation. During this step, the ribosome changes from the pre-translocational (PRE) to the post-translocational (POST) state as the newly formed A-site-bound peptidyl-tRNA and P-site-bound deacylated tRNA move to the P and E sites, respectively. Catalyzes the coordinated movement of the two tRNA molecules, the mRNA and conformational changes in the ribosome. The chain is Elongation factor G from Haemophilus ducreyi (strain 35000HP / ATCC 700724).